We begin with the raw amino-acid sequence, 1030 residues long: Tricorn protease (1030 aa).

Residues 1 to 270 form a six-bladed beta propeller region; that stretch reads MANLLQNPDI…DNVKSLDIGP (270 aa). Residues 93 to 94 are binds the substrate's C-terminus; that stretch reads RR. The seven-bladed beta propeller stretch occupies residues 286–635; the sequence is LEDFSMSPGD…EEEKSLNIDA (350 aa). Residues 641 to 712 form a C-1 region; the sequence is NVKEDFAEMY…RTSHSYEMGG (72 aa). The Charge relay system role is filled by His706. A PDZ-like region spans residues 721 to 816; the sequence is RAGRIACDFK…SGFVDVLQDD (96 aa). The segment at 817 to 1022 is C-2; the sequence is RYIRYRAWVE…IEMVLADLEK (206 aa). A substrate-binding site is contributed by 877 to 879; it reads GGG. Ser926 acts as the Nucleophile in catalysis. 954 to 956 contributes to the substrate binding site; it reads GIS. Catalysis depends on Glu984, which acts as the Charge relay system.

The protein belongs to the peptidase S41B family. In terms of assembly, part of the tricorn proteolytic complex.

The protein localises to the cytoplasm. Tricorn degrades oligopeptides in a sequential manner. This is Tricorn protease (tri) from Thermoplasma volcanium (strain ATCC 51530 / DSM 4299 / JCM 9571 / NBRC 15438 / GSS1).